The sequence spans 188 residues: MASYTTTDFKPGLKFMQDGEPCVIIENEFVKPGKGQAFTRTRIRKLISGKVLDVNFKSGTSVEAADVMDLNLNYSYKDEAFWYFMHPETFEQYSADAKAVGEAEKWLLDQAECIVTLWNGSPISVTPPNFVELEVVDTDPGLKGDTAGTGGKPATLSTGAVVRVPLFIQIGEVIKVDTRSGEYVSRVK.

Residue K34 is modified to N6-(3,6-diaminohexanoyl)-5-hydroxylysine.

It belongs to the elongation factor P family. May be beta-lysylated on the epsilon-amino group of Lys-34 by the combined action of EpmA and EpmB, and then hydroxylated on the C5 position of the same residue by EpmC (if this protein is present). Lysylation is critical for the stimulatory effect of EF-P on peptide-bond formation. The lysylation moiety may extend toward the peptidyltransferase center and stabilize the terminal 3-CCA end of the tRNA. Hydroxylation of the C5 position on Lys-34 may allow additional potential stabilizing hydrogen-bond interactions with the P-tRNA.

Its subcellular location is the cytoplasm. It functions in the pathway protein biosynthesis; polypeptide chain elongation. In terms of biological role, involved in peptide bond synthesis. Alleviates ribosome stalling that occurs when 3 or more consecutive Pro residues or the sequence PPG is present in a protein, possibly by augmenting the peptidyl transferase activity of the ribosome. Modification of Lys-34 is required for alleviation. This is Elongation factor P from Actinobacillus succinogenes (strain ATCC 55618 / DSM 22257 / CCUG 43843 / 130Z).